Reading from the N-terminus, the 28-residue chain is ARQLNPSDQELQSPQQLYPQQPYPQQPY.

The disordered stretch occupies residues 1–28 (ARQLNPSDQELQSPQQLYPQQPYPQQPY). Positions 9 to 20 (QELQSPQQLYPQ) are enriched in low complexity.

This Triticum monococcum (Einkorn wheat) protein is Omega-gliadin.